We begin with the raw amino-acid sequence, 474 residues long: MAGISIGVGSTDYTDLVNKMVNLEGAAKTNQLATLEKTTTTRLTALGQFKSAISAFQTALTALNSNAVFMARTAKSSNEDILKASATQSAVAGTYQIQVNSLATSSKIALQAIADPANAKFNSGTLNISVGDTKLPAITVDSSNNTLAGMRDAINQAGKEAGVSATIITDNSGSRLVLSSTKTGDGKDIKVEVSDDGSGGNTSLSQLAFDPATAPKLSDGAAAGYVTKAANGEITVDGLKRSIASNSVSDVIDGVSFDVKAVTEAGKPITLTVSRDDAGVKDNVKKFVEAYNTLTKFINEQTVVTKVGEDKNPVTGALLGDASVRALVNTMRSELIASNENGSVRNLAALGITTTKDGTLEIDEKKLDKAISADFEGVASYFTGDTGLAKRLGDKMKPYTDAQGILDQRTTTLQKTLSNVDTQKADLAKRLAALQEKLTTQFNLLSAMQDEMTKRQKSITDNLASLPYGSGKKT.

Positions 408–454 form a coiled coil; it reads QRTTTLQKTLSNVDTQKADLAKRLAALQEKLTTQFNLLSAMQDEMTK.

Belongs to the FliD family. In terms of assembly, homopentamer.

Its subcellular location is the secreted. It localises to the bacterial flagellum. Its function is as follows. Required for the morphogenesis and for the elongation of the flagellar filament by facilitating polymerization of the flagellin monomers at the tip of growing filament. Forms a capping structure, which prevents flagellin subunits (transported through the central channel of the flagellum) from leaking out without polymerization at the distal end. Essential for motility. Responsible for adhesion to mucin, which is the initial event in colonization by this organism of the airways of cystic fibrosis patients. This Pseudomonas aeruginosa (strain ATCC 15692 / DSM 22644 / CIP 104116 / JCM 14847 / LMG 12228 / 1C / PRS 101 / PAO1) protein is B-type flagellar hook-associated protein 2 (fliD).